The primary structure comprises 199 residues: VAMP-like protein YKT62 (199 aa).

Residues 7-131 form the Longin domain; the sequence is LVLKCDPETR…PYLKEASDKF (125 aa). Positions 139 to 199 constitute a v-SNARE coiled-coil homology domain; it reads KLLKIQRELD…KKTNSCCTLL (61 aa). Cys195 is lipidated: S-palmitoyl cysteine. Cys196 carries the post-translational modification Cysteine methyl ester. Residue Cys196 is the site of S-geranylgeranyl cysteine attachment. The propeptide at 197-199 is removed in mature form; sequence TLL.

Belongs to the synaptobrevin family. As to quaternary structure, interacts with SYP41. Core constituent of the SNARE complex required for membrane fusion at the trans-Golgi network.

It is found in the cell membrane. In terms of biological role, involved in the secretory pathway. Essential for membrane fusion mediated by either SYP41 or SYP61; triggers the fusion of phospholipid vesicles containing SYP41 or SYP61 and VTI12. This chain is VAMP-like protein YKT62, found in Arabidopsis thaliana (Mouse-ear cress).